The primary structure comprises 265 residues: Glutamate racemase (265 aa).

Substrate contacts are provided by residues D7–S8 and Y39–G40. Catalysis depends on C70, which acts as the Proton donor/acceptor. N71–T72 contacts substrate. The active-site Proton donor/acceptor is C179. Residue T180 to H181 coordinates substrate.

Belongs to the aspartate/glutamate racemases family.

The enzyme catalyses L-glutamate = D-glutamate. Its pathway is cell wall biogenesis; peptidoglycan biosynthesis. Provides the (R)-glutamate required for cell wall biosynthesis. The chain is Glutamate racemase from Gloeobacter violaceus (strain ATCC 29082 / PCC 7421).